The following is a 264-amino-acid chain: Thymidylate synthase (264 aa).

Arginine 21 is a binding site for dUMP. Histidine 51 contacts (6R)-5,10-methylene-5,6,7,8-tetrahydrofolate. A dUMP-binding site is contributed by 126 to 127 (RR). Cysteine 146 functions as the Nucleophile in the catalytic mechanism. Residues 166–169 (RSCD), asparagine 177, and 207–209 (HLY) each bind dUMP. Aspartate 169 lines the (6R)-5,10-methylene-5,6,7,8-tetrahydrofolate pocket. Serine 263 is a (6R)-5,10-methylene-5,6,7,8-tetrahydrofolate binding site.

The protein belongs to the thymidylate synthase family. Bacterial-type ThyA subfamily. As to quaternary structure, homodimer.

The protein localises to the cytoplasm. The enzyme catalyses dUMP + (6R)-5,10-methylene-5,6,7,8-tetrahydrofolate = 7,8-dihydrofolate + dTMP. It functions in the pathway pyrimidine metabolism; dTTP biosynthesis. Functionally, catalyzes the reductive methylation of 2'-deoxyuridine-5'-monophosphate (dUMP) to 2'-deoxythymidine-5'-monophosphate (dTMP) while utilizing 5,10-methylenetetrahydrofolate (mTHF) as the methyl donor and reductant in the reaction, yielding dihydrofolate (DHF) as a by-product. This enzymatic reaction provides an intracellular de novo source of dTMP, an essential precursor for DNA biosynthesis. The polypeptide is Thymidylate synthase (Buchnera aphidicola subsp. Acyrthosiphon pisum (strain APS) (Acyrthosiphon pisum symbiotic bacterium)).